The following is a 59-amino-acid chain: Potassium channel toxin alpha-KTx 4.1 (59 aa).

Residues M1–Q22 form the signal peptide. Intrachain disulfides connect C29/C50, C35/C55, and C39/C57. The tract at residues G48–C55 is interaction with Ca(2+)-activated K(+) channels.

It belongs to the short scorpion toxin superfamily. Potassium channel inhibitor family. Alpha-KTx 04 subfamily. Expressed by the venom gland.

The protein resides in the secreted. In terms of biological role, potently blocks Kv1.1/KCNA1 (85%), Kv1.2/KCNA2 (91%), Kv1.3/KCNA3 (89%), Kv1.6/KCNA6 (94%), and Shaker (97%). This chain is Potassium channel toxin alpha-KTx 4.1, found in Tityus serrulatus (Brazilian scorpion).